The primary structure comprises 247 residues: tRNA uridine(34) hydroxylase (247 aa).

The 95-residue stretch at 124-218 (TQQDVIVIDT…YLEDTQNKNN (95 aa)) folds into the Rhodanese domain. The active-site Cysteine persulfide intermediate is Cys-178.

Belongs to the TrhO family.

It carries out the reaction uridine(34) in tRNA + AH2 + O2 = 5-hydroxyuridine(34) in tRNA + A + H2O. In terms of biological role, catalyzes oxygen-dependent 5-hydroxyuridine (ho5U) modification at position 34 in tRNAs. In Rickettsia conorii (strain ATCC VR-613 / Malish 7), this protein is tRNA uridine(34) hydroxylase.